We begin with the raw amino-acid sequence, 356 residues long: Glutamate 5-kinase (356 aa).

Lysine 6 is a binding site for ATP. Substrate is bound by residues serine 46, aspartate 135, and asparagine 147. 202-208 (TGGMRSK) serves as a coordination point for ATP. The PUA domain maps to 265–342 (KGIIVVDRGA…SEVRKLLNTT (78 aa)).

This sequence belongs to the glutamate 5-kinase family.

The protein localises to the cytoplasm. The catalysed reaction is L-glutamate + ATP = L-glutamyl 5-phosphate + ADP. The protein operates within amino-acid biosynthesis; L-proline biosynthesis; L-glutamate 5-semialdehyde from L-glutamate: step 1/2. Catalyzes the transfer of a phosphate group to glutamate to form L-glutamate 5-phosphate. In Aquifex aeolicus (strain VF5), this protein is Glutamate 5-kinase.